A 473-amino-acid chain; its full sequence is MKLSMPRFDQAPVLVVGDVMLDRYWHGGTSRISPEAPVPVVKVDQIEDRPGGAANVALNIAALGAPASLIGVTGQDEAADSLANSLQAAGVRSVFQRIAHQPTIVKLRVMSRHQQLLRIDFEEPFATDPLSLGAEVDSLLEGVKVLVLSDYGKGALKNHQNLIQAARAKGIPVLADPKGKDFSIYRGASLITPNLSEFETIVGRCVDEAELVAKGLQLLQDLDLGALLVTRGEHGMTLLRVGQPALHLPARAREVFDVTGAGDTVISTLAAAIAAGEDLPHAVALANLAAGIVVGKLGTAAISAPELRRAIQREEGSERGVLGLEQLLLAIDDARAHNEKIVFTNGCFDILHAGHVTYLEQARAQGDRLIVAVNDDASVSRLKGPGRPINSVDRRMAVLAGLGAVDWVISFPEGTPENLLSQVKPDVLVKGGDYGIDQVVGADIVKGYGGTVKVLGLVENSSTTAIVEKIRKN.

The segment at 1-318 (MKLSMPRFDQ…RAIQREEGSE (318 aa)) is ribokinase. 194–197 (NLSE) is an ATP binding site. The active site involves D263. Residues 343-473 (FTNGCFDILH…TAIVEKIRKN (131 aa)) form a cytidylyltransferase region.

This sequence in the N-terminal section; belongs to the carbohydrate kinase PfkB family. The protein in the C-terminal section; belongs to the cytidylyltransferase family. Homodimer.

It carries out the reaction D-glycero-beta-D-manno-heptose 7-phosphate + ATP = D-glycero-beta-D-manno-heptose 1,7-bisphosphate + ADP + H(+). The enzyme catalyses D-glycero-beta-D-manno-heptose 1-phosphate + ATP + H(+) = ADP-D-glycero-beta-D-manno-heptose + diphosphate. The protein operates within nucleotide-sugar biosynthesis; ADP-L-glycero-beta-D-manno-heptose biosynthesis; ADP-L-glycero-beta-D-manno-heptose from D-glycero-beta-D-manno-heptose 7-phosphate: step 1/4. Its pathway is nucleotide-sugar biosynthesis; ADP-L-glycero-beta-D-manno-heptose biosynthesis; ADP-L-glycero-beta-D-manno-heptose from D-glycero-beta-D-manno-heptose 7-phosphate: step 3/4. Its function is as follows. Catalyzes the phosphorylation of D-glycero-D-manno-heptose 7-phosphate at the C-1 position to selectively form D-glycero-beta-D-manno-heptose-1,7-bisphosphate. Functionally, catalyzes the ADP transfer from ATP to D-glycero-beta-D-manno-heptose 1-phosphate, yielding ADP-D-glycero-beta-D-manno-heptose. This Pseudomonas putida (strain ATCC 47054 / DSM 6125 / CFBP 8728 / NCIMB 11950 / KT2440) protein is Bifunctional protein HldE.